The sequence spans 671 residues: MEPIEQQLTELRTTLRHHEYLYHVMDAPEIPDAEYDRLMRELRELEAQRPDLITPDSPTQRVGAAPLTAFNQIRHEVPMLSLDNVFDEESFLAFNKRVQDRLKSTENVIWCCELKLDGLAVSILYENGVLVSAATRGDGTTGEDITSNVRTIRAIPLKLHGDNIPARLEVRGEVFLPQAGFEKINEDARRTGGKVFANPRNAAAGSLRQLDPRITAKRPLTFFCYGVGILEGGELPDTHLGRLLQFKAWGLPVSDRVTLCDSPQAVLDFYHNVEKDRPTLGFDIDGVVIKVNSLALQEQLGFVARAPRWAVAFKFPAQEQMTFVRDVEFQVGRTGAITPVARLEPVQVAGVLVSNATLHNADEIERLGLRIGDKVVIRRAGDVIPQVVNVVLSERPEETRPIVFPTHCPVCGSDVERVEGEAVTRCTGGLICGAQRKESLKHFVSRRAMDVDGMGDKIIDQLVEREYVHTPADLFRLTAGKLTGLDRMGPKSAQNVVNALEKAKATTFARFLYALGIREVGEATAAGLAAYFGTLEALQAATIDELQKVPDVGIVVATHVFNFFAEESNRDVIGQLLAEGVHWPAPVVINVQEIDSPFAGKTVVLTGSLSQMSRDDAKARLVALGAKVAGSVSKKTDLVIAGEAAGSKLTKAQELGITVIDEAEMIRLLDA.

NAD(+)-binding positions include 32–36 (DAEYD), 81–82 (SL), and E113. The active-site N6-AMP-lysine intermediate is the K115. Residues R136, E173, K290, and K314 each contribute to the NAD(+) site. 4 residues coordinate Zn(2+): C408, C411, C426, and C432. The region spanning 593-671 (EIDSPFAGKT…EAEMIRLLDA (79 aa)) is the BRCT domain.

It belongs to the NAD-dependent DNA ligase family. LigA subfamily. Requires Mg(2+) as cofactor. The cofactor is Mn(2+).

The catalysed reaction is NAD(+) + (deoxyribonucleotide)n-3'-hydroxyl + 5'-phospho-(deoxyribonucleotide)m = (deoxyribonucleotide)n+m + AMP + beta-nicotinamide D-nucleotide.. In terms of biological role, DNA ligase that catalyzes the formation of phosphodiester linkages between 5'-phosphoryl and 3'-hydroxyl groups in double-stranded DNA using NAD as a coenzyme and as the energy source for the reaction. It is essential for DNA replication and repair of damaged DNA. The protein is DNA ligase of Salmonella schwarzengrund (strain CVM19633).